The chain runs to 393 residues: Acetate kinase (393 aa).

Asparagine 7 contacts Mg(2+). Lysine 14 is an ATP binding site. Position 87 (arginine 87) interacts with substrate. Catalysis depends on aspartate 144, which acts as the Proton donor/acceptor. Residues 202 to 206 (HIGNG), 277 to 279 (DLR), and 326 to 330 (GVGEN) each bind ATP. A Mg(2+)-binding site is contributed by glutamate 380.

Belongs to the acetokinase family. In terms of assembly, homodimer. The cofactor is Mg(2+). It depends on Mn(2+) as a cofactor.

It is found in the cytoplasm. The catalysed reaction is acetate + ATP = acetyl phosphate + ADP. It participates in metabolic intermediate biosynthesis; acetyl-CoA biosynthesis; acetyl-CoA from acetate: step 1/2. Catalyzes the formation of acetyl phosphate from acetate and ATP. Can also catalyze the reverse reaction. This is Acetate kinase from Mycoplasmopsis pulmonis (strain UAB CTIP) (Mycoplasma pulmonis).